The chain runs to 679 residues: Methyl-accepting chemotaxis protein McpB (679 aa).

Divergent domain HAMP stretches follow at residues 8–56 (AVAQ…RQLR), 63–112 (QQVE…AAHI), and 111–156 (HIAV…ERLR). The PAS domain occupies 171 to 213 (YNARIKSALDNVSANVMIADNDLNIIYMNRTVSEMLGRAEADI). Residue histidine 234 participates in heme binding. The short motif at 285-287 (DRT) is the DxT. Important for signal propagation element. The segment at 289–332 (EHRAEQEVSQLVQAAAAGDFSKRVEEAGKEGFFLRLAKDLNSLV) is divergent domain HAMP 4. The HAMP 5 domain maps to 333–385 (DTADRGLRDVSRMLGALAQGDLTQRIEADYQGTFGQLKDFSNDTAQSLSRMLG). One can recognise a Methyl-accepting transducer domain in the interval 390-619 (AADTINTAAS…EAAAAAEAMQ (230 aa)). 2 disordered regions span residues 405–425 (NAELSARTEQQASSLEETASS) and 644–679 (ASARPSAPRPSAPAPLARSGMARASKARKEDGWEEF). The segment covering 411 to 425 (RTEQQASSLEETASS) has biased composition (polar residues). Basic and acidic residues predominate over residues 670-679 (ARKEDGWEEF). Residues 675–679 (GWEEF) carry the GWEEF pentapeptide. Important for methylation by CheR2 motif.

It belongs to the methyl-accepting chemotaxis (MCP) protein family. As to quaternary structure, homodimer. The PAS domains form dimers in the presence and absence of oxygen. Interacts with the methyltransferase CheR2 via the C-terminal McpB pentapeptide GWEEF. Interacts with the methylesterase/gutaminase CheB2, which also binds to the GWEEF pentapeptide. Post-translationally, methylated by CheR2, but not by CheR1, CheR3 or WspC. Demethylated by CheB2. In vitro, can be methylated by E.coli CheR.

Its subcellular location is the cytoplasm. In terms of biological role, chemoreceptor that plays a critical role in the virulence and pathogenesis of P.aeruginosa in a variety of hosts. Probably acts through oxygen sensing. Uses a heme-based sensor. Could be involved in chemotaxis. When expressed in E.coli, is able to sense and mediate repellent responses to oxygen, carbon monoxide and nitric oxide. In Pseudomonas aeruginosa (strain ATCC 15692 / DSM 22644 / CIP 104116 / JCM 14847 / LMG 12228 / 1C / PRS 101 / PAO1), this protein is Methyl-accepting chemotaxis protein McpB.